The following is a 580-amino-acid chain: uncharacterized protein (580 aa).

The region spanning 300–525 is the PE-PPE domain; the sequence is PGYTATFLET…LRVLVELGYD (226 aa).

This sequence belongs to the mycobacterial PPE family.

This is an uncharacterized protein from Mycobacterium tuberculosis (strain CDC 1551 / Oshkosh).